The chain runs to 322 residues: Secretion system apparatus protein SsaQ (322 aa).

This sequence belongs to the FliN/MopA/SpaO family.

Part of a type III secretion system. In Salmonella typhimurium (strain LT2 / SGSC1412 / ATCC 700720), this protein is Secretion system apparatus protein SsaQ (ssaQ).